A 201-amino-acid polypeptide reads, in one-letter code: Potassium-transporting ATPase KdpC subunit (201 aa).

The chain crosses the membrane as a helical span at residues 17 to 37; the sequence is LLTGLAYPLAMTGLAGILFPV.

Belongs to the KdpC family. The system is composed of three essential subunits: KdpA, KdpB and KdpC.

The protein localises to the cell inner membrane. Functionally, part of the high-affinity ATP-driven potassium transport (or Kdp) system, which catalyzes the hydrolysis of ATP coupled with the electrogenic transport of potassium into the cytoplasm. This subunit acts as a catalytic chaperone that increases the ATP-binding affinity of the ATP-hydrolyzing subunit KdpB by the formation of a transient KdpB/KdpC/ATP ternary complex. The sequence is that of Potassium-transporting ATPase KdpC subunit from Methylobacterium nodulans (strain LMG 21967 / CNCM I-2342 / ORS 2060).